The primary structure comprises 373 residues: Ferroptosis suppressor protein 1 (373 aa).

G2 is lipidated: N-myristoyl glycine. The chain crosses the membrane as a helical span at residues 7 to 27; it reads VESGALHVVIVGGGFGGIAAA. Residues 18–22, R54, and V82 each bind 6-hydroxy-FAD; that span reads GGGFG. K168 is subject to N6-acetyllysine; by KAT2B. D285 contacts 6-hydroxy-FAD.

Belongs to the FAD-dependent oxidoreductase family. In terms of assembly, interacts with importin subunits KPNA2 and IPO5; this interaction likely mediates the translocation into the nucleus upon oxidative stress. The cofactor is 6-hydroxy-FAD. N-myristoylation at Gly-2 mediates the recruitment to lipid droplets and plasma membrane, enabling its anti-lipid peroxidation activity. In terms of processing, acetylation at Lys-168 prevents AIFM2 ubiquitination and degradation, thereby inhibiting ferroptosis. KAT2B mediates acetylation at Lys-168, while HDAC3 removes it. Post-translationally, ubiquitinated. AIFM2 undergoes 'Lys-29'-ubiquitination and proteasomal degradation, which is inhibited by acetylation at Lys-168. Detected in most normal tissues as two transcripts of 1.8 and 4.0 kb in length, respectively. Highly expressed in heart, moderately in liver and skeletal muscles, and expressed at low levels in placenta, lung, kidney, and pancreas. Both transcripts expressed following p53/TP53 induction. The shorter 1.8 kb transcript seems to be the major transcript in EB1 colon cancer cells.

Its subcellular location is the lipid droplet. It localises to the cell membrane. The protein resides in the cytoplasm. It is found in the mitochondrion membrane. The protein localises to the nucleus. It catalyses the reaction ubiquinone-10 + NADH + H(+) = ubiquinol-10 + NAD(+). The catalysed reaction is phylloquinone + NADH + H(+) = phylloquinol + NAD(+). The enzyme catalyses menaquinone-4 + NADH + H(+) = menaquinol-4 + NAD(+). It carries out the reaction menadione + NADH + H(+) = menadiol + NAD(+). Its activity is regulated as follows. The modification by 4-hydroxy-2-nonenal (HNE) adduction in mitochondria results in loss of the oxidoreductase activity and activation of a novel function in mitochondrial oxidative stress signaling. Functionally, a NAD(P)H-dependent oxidoreductase that acts as a key inhibitor of ferroptosis. At the plasma membrane, catalyzes reduction of coenzyme Q/ubiquinone-10 to ubiquinol-10, a lipophilic radical-trapping antioxidant that prevents lipid oxidative damage and consequently ferroptosis. Acts in parallel to GPX4 to suppress phospholipid peroxidation and ferroptosis. This anti-ferroptotic function is independent of cellular glutathione levels. Also acts as a potent radical-trapping antioxidant by mediating warfarin-resistant vitamin K reduction in the canonical vitamin K cycle: catalyzes NAD(P)H-dependent reduction of vitamin K (phylloquinone, menaquinone-4 and menadione) to hydroquinone forms. Hydroquinones act as potent radical-trapping antioxidants inhibitor of phospholipid peroxidation and ferroptosis. May play a role in mitochondrial stress signaling. Upon oxidative stress, associates with the lipid peroxidation end product 4-hydroxy-2-nonenal (HNE) forming a lipid adduct devoid of oxidoreductase activity, which then translocates from mitochondria into the nucleus triggering DNA damage and cell death. Capable of DNA binding in a non-sequence specific way. This Homo sapiens (Human) protein is Ferroptosis suppressor protein 1.